Reading from the N-terminus, the 151-residue chain is Deoxyuridine 5'-triphosphate nucleotidohydrolase (151 aa).

Substrate is bound by residues arginine 70–glycine 72, asparagine 83, leucine 87–aspartate 89, and methionine 97.

This sequence belongs to the dUTPase family. In terms of assembly, homotrimer. It depends on Mg(2+) as a cofactor.

The enzyme catalyses dUTP + H2O = dUMP + diphosphate + H(+). Its pathway is pyrimidine metabolism; dUMP biosynthesis; dUMP from dCTP (dUTP route): step 2/2. Its function is as follows. This enzyme is involved in nucleotide metabolism: it produces dUMP, the immediate precursor of thymidine nucleotides and it decreases the intracellular concentration of dUTP so that uracil cannot be incorporated into DNA. This Escherichia coli O45:K1 (strain S88 / ExPEC) protein is Deoxyuridine 5'-triphosphate nucleotidohydrolase.